A 297-amino-acid polypeptide reads, in one-letter code: Probable endonuclease 4 (297 aa).

Residues His69, His110, Glu145, Asp179, His182, His214, Asp227, His229, and Glu259 each contribute to the Zn(2+) site.

It belongs to the AP endonuclease 2 family. Zn(2+) is required as a cofactor.

It catalyses the reaction Endonucleolytic cleavage to 5'-phosphooligonucleotide end-products.. Functionally, endonuclease IV plays a role in DNA repair. It cleaves phosphodiester bonds at apurinic or apyrimidinic (AP) sites, generating a 3'-hydroxyl group and a 5'-terminal sugar phosphate. This chain is Probable endonuclease 4, found in Bacillus licheniformis (strain ATCC 14580 / DSM 13 / JCM 2505 / CCUG 7422 / NBRC 12200 / NCIMB 9375 / NCTC 10341 / NRRL NRS-1264 / Gibson 46).